The following is a 226-amino-acid chain: Ribosome-recycling factor, mitochondrial (226 aa).

The protein belongs to the RRF family.

It is found in the mitochondrion. Necessary for protein synthesis in mitochondria. Functions as a ribosome recycling factor in mitochondria. In Eremothecium gossypii (strain ATCC 10895 / CBS 109.51 / FGSC 9923 / NRRL Y-1056) (Yeast), this protein is Ribosome-recycling factor, mitochondrial (RRF1).